Reading from the N-terminus, the 321-residue chain is Lipoyl synthase (321 aa).

7 residues coordinate [4Fe-4S] cluster: Cys68, Cys73, Cys79, Cys94, Cys98, Cys101, and Ser308. In terms of domain architecture, Radical SAM core spans 80–297 (FNHGTATFMI…KEVALELGFT (218 aa)).

Belongs to the radical SAM superfamily. Lipoyl synthase family. The cofactor is [4Fe-4S] cluster.

It is found in the cytoplasm. It carries out the reaction [[Fe-S] cluster scaffold protein carrying a second [4Fe-4S](2+) cluster] + N(6)-octanoyl-L-lysyl-[protein] + 2 oxidized [2Fe-2S]-[ferredoxin] + 2 S-adenosyl-L-methionine + 4 H(+) = [[Fe-S] cluster scaffold protein] + N(6)-[(R)-dihydrolipoyl]-L-lysyl-[protein] + 4 Fe(3+) + 2 hydrogen sulfide + 2 5'-deoxyadenosine + 2 L-methionine + 2 reduced [2Fe-2S]-[ferredoxin]. It participates in protein modification; protein lipoylation via endogenous pathway; protein N(6)-(lipoyl)lysine from octanoyl-[acyl-carrier-protein]: step 2/2. Its function is as follows. Catalyzes the radical-mediated insertion of two sulfur atoms into the C-6 and C-8 positions of the octanoyl moiety bound to the lipoyl domains of lipoate-dependent enzymes, thereby converting the octanoylated domains into lipoylated derivatives. This is Lipoyl synthase from Vibrio cholerae serotype O1 (strain ATCC 39315 / El Tor Inaba N16961).